Here is a 55-residue protein sequence, read N- to C-terminus: UPF0434 protein Erum1340/ERWE_CDS_01300 (55 aa).

It belongs to the UPF0434 family.

This is UPF0434 protein Erum1340/ERWE_CDS_01300 from Ehrlichia ruminantium (strain Welgevonden).